Consider the following 1598-residue polypeptide: Structural maintenance of chromosomes flexible hinge domain-containing protein GMI1 (1598 aa).

The disordered stretch occupies residues 1191–1218; it reads VTSAPTSEREESGYSTPHSKTTPPPESG. Coiled coils occupy residues 1258-1301 and 1565-1595; these read TEDL…ASLE and EEMM…FTAM.

Highly expressed in closed buds and open flowers. Expressed at low levels in roots, stems, cauline leaves and siliques. Expressed in the region of the shoot and floral meristems.

It localises to the nucleus. Functionally, contributes to DNA double-strand break (DSB) repair via somatic homologous recombination. Functions downstream of ATM. The chain is Structural maintenance of chromosomes flexible hinge domain-containing protein GMI1 from Arabidopsis thaliana (Mouse-ear cress).